The chain runs to 331 residues: Biotin synthase (331 aa).

Residues 52–277 (PEVEVEGIVS…RTILRYAGGR (226 aa)) enclose the Radical SAM core domain. [4Fe-4S] cluster-binding residues include Cys-67, Cys-71, and Cys-74. Residues Cys-110, Cys-202, and Arg-272 each contribute to the [2Fe-2S] cluster site.

Belongs to the radical SAM superfamily. Biotin synthase family. As to quaternary structure, homodimer. The cofactor is [4Fe-4S] cluster. [2Fe-2S] cluster is required as a cofactor.

It carries out the reaction (4R,5S)-dethiobiotin + (sulfur carrier)-SH + 2 reduced [2Fe-2S]-[ferredoxin] + 2 S-adenosyl-L-methionine = (sulfur carrier)-H + biotin + 2 5'-deoxyadenosine + 2 L-methionine + 2 oxidized [2Fe-2S]-[ferredoxin]. It functions in the pathway cofactor biosynthesis; biotin biosynthesis; biotin from 7,8-diaminononanoate: step 2/2. Its function is as follows. Catalyzes the conversion of dethiobiotin (DTB) to biotin by the insertion of a sulfur atom into dethiobiotin via a radical-based mechanism. This is Biotin synthase from Salinispora tropica (strain ATCC BAA-916 / DSM 44818 / JCM 13857 / NBRC 105044 / CNB-440).